Consider the following 207-residue polypeptide: ATP-dependent Clp protease proteolytic subunit 1 (207 aa).

S103 acts as the Nucleophile in catalysis. H128 is an active-site residue.

The protein belongs to the peptidase S14 family. Fourteen ClpP subunits assemble into 2 heptameric rings which stack back to back to give a disk-like structure with a central cavity, resembling the structure of eukaryotic proteasomes.

It localises to the cytoplasm. The catalysed reaction is Hydrolysis of proteins to small peptides in the presence of ATP and magnesium. alpha-casein is the usual test substrate. In the absence of ATP, only oligopeptides shorter than five residues are hydrolyzed (such as succinyl-Leu-Tyr-|-NHMec, and Leu-Tyr-Leu-|-Tyr-Trp, in which cleavage of the -Tyr-|-Leu- and -Tyr-|-Trp bonds also occurs).. Functionally, cleaves peptides in various proteins in a process that requires ATP hydrolysis. Has a chymotrypsin-like activity. Plays a major role in the degradation of misfolded proteins. This Tropheryma whipplei (strain Twist) (Whipple's bacillus) protein is ATP-dependent Clp protease proteolytic subunit 1.